The primary structure comprises 173 residues: Probable DNA-directed RNA polymerase subunit delta (173 aa).

The HTH HARE-type domain maps to Leu14 to Trp81. The tract at residues Gln86 to Arg173 is disordered. Positions Ile109–Arg173 are enriched in acidic residues.

The protein belongs to the RpoE family. RNAP is composed of a core of 2 alpha, a beta and a beta' subunits. The core is associated with a delta subunit and one of several sigma factors.

Participates in both the initiation and recycling phases of transcription. In the presence of the delta subunit, RNAP displays an increased specificity of transcription, a decreased affinity for nucleic acids, and an increased efficiency of RNA synthesis because of enhanced recycling. This chain is Probable DNA-directed RNA polymerase subunit delta, found in Oceanobacillus iheyensis (strain DSM 14371 / CIP 107618 / JCM 11309 / KCTC 3954 / HTE831).